The chain runs to 87 residues: Putative membrane protein insertion efficiency factor (87 aa).

The protein belongs to the UPF0161 family.

The protein localises to the cell membrane. Functionally, could be involved in insertion of integral membrane proteins into the membrane. This Streptococcus pyogenes serotype M12 (strain MGAS2096) protein is Putative membrane protein insertion efficiency factor.